The chain runs to 156 residues: Mitochondrial intermembrane space cysteine motif-containing protein MIX17 (156 aa).

A mitochondrion-targeting transit peptide spans 1–21 (MARSRGSSRPISRSRPTQTRS). The span at 1–21 (MARSRGSSRPISRSRPTQTRS) shows a compositional bias: low complexity. Disordered regions lie at residues 1-50 (MARS…GAQT) and 78-110 (AGIT…QTQT). The segment covering 84 to 110 (FSGSGSDSAPVEQQQQNMANTSGQTQT) has biased composition (polar residues). Residues 115 to 156 (GRTCEIDARNFTRCLDENNGNFQICDYYLQQLKACQEAARQY) form the CHCH domain. A Cx9C motif motif is present at residues 118–128 (CEIDARNFTRC). 2 cysteine pairs are disulfide-bonded: cysteine 118-cysteine 149 and cysteine 128-cysteine 139.

It is found in the mitochondrion intermembrane space. The polypeptide is Mitochondrial intermembrane space cysteine motif-containing protein MIX17 (MIX17) (Saccharomyces cerevisiae (strain ATCC 204508 / S288c) (Baker's yeast)).